The following is a 190-amino-acid chain: Elongation factor P (190 aa).

The protein belongs to the elongation factor P family.

Its subcellular location is the cytoplasm. It functions in the pathway protein biosynthesis; polypeptide chain elongation. In terms of biological role, involved in peptide bond synthesis. Stimulates efficient translation and peptide-bond synthesis on native or reconstituted 70S ribosomes in vitro. Probably functions indirectly by altering the affinity of the ribosome for aminoacyl-tRNA, thus increasing their reactivity as acceptors for peptidyl transferase. This Persephonella marina (strain DSM 14350 / EX-H1) protein is Elongation factor P.